The sequence spans 350 residues: Biotin synthase (350 aa).

The region spanning 41–268 (NEVQISRLLS…LSRVRLSAGR (228 aa)) is the Radical SAM core domain. 3 residues coordinate [4Fe-4S] cluster: Cys56, Cys60, and Cys63. 4 residues coordinate [2Fe-2S] cluster: Cys100, Cys131, Cys191, and Arg263.

The protein belongs to the radical SAM superfamily. Biotin synthase family. As to quaternary structure, homodimer. The cofactor is [4Fe-4S] cluster. Requires [2Fe-2S] cluster as cofactor.

It carries out the reaction (4R,5S)-dethiobiotin + (sulfur carrier)-SH + 2 reduced [2Fe-2S]-[ferredoxin] + 2 S-adenosyl-L-methionine = (sulfur carrier)-H + biotin + 2 5'-deoxyadenosine + 2 L-methionine + 2 oxidized [2Fe-2S]-[ferredoxin]. It functions in the pathway cofactor biosynthesis; biotin biosynthesis; biotin from 7,8-diaminononanoate: step 2/2. In terms of biological role, catalyzes the conversion of dethiobiotin (DTB) to biotin by the insertion of a sulfur atom into dethiobiotin via a radical-based mechanism. This is Biotin synthase from Shewanella oneidensis (strain ATCC 700550 / JCM 31522 / CIP 106686 / LMG 19005 / NCIMB 14063 / MR-1).